A 346-amino-acid chain; its full sequence is MSGYTASVVGASGFTGGEVLRLLSGHPEMAVTQATSRSYENKTVGSIHPNLRGMDLRFSSPEELESVDVLFACTPHGVSMEHIDAFQDAADTVVDLSADFRLDIESQYDEWYDGHNRPELLDKAEYALPELNRENLPGADIVASGGCNATAAIMGLKPLFDGDILGGGEQIVVDVKVGSSEGGAGGGEASSHPERSGVVRPYAPTGHRHEAEIEQFLGTGVSFTAHAVDMTRGASATCHVYPEEPVSKGDLWSAFRESYEDEPFVRLVAGGSGVYRYPEPKAVAGSNYAEVGFELDPTNKRVVVFSAIDNMMKGSAGQAVHAANIALGIEETAGLEFAGLHPVGAP.

12-15 contributes to the NADP(+) binding site; sequence SGFT. Cys-147 is a catalytic residue. Asn-310 is a binding site for NADP(+).

It belongs to the NAGSA dehydrogenase family. Type 1 subfamily. LysY sub-subfamily.

It localises to the cytoplasm. It carries out the reaction [amino-group carrier protein]-C-terminal-N-(1-carboxy-5-oxopentan-1-yl)-L-glutamine + phosphate + NADP(+) = [amino-group carrier protein]-C-terminal-N-(1-carboxy-5-phosphooxy-5-oxopentan-1-yl)-L-glutamine + NADPH + H(+). The catalysed reaction is [amino-group carrier protein]-C-terminal-gamma-(L-glutamyl-5-semialdehyde)-L-glutamate + phosphate + NADP(+) = [amino-group carrier protein]-C-terminal-gamma-(5-phospho-L-glutamyl)-L-glutamate + NADPH + H(+). The protein operates within amino-acid biosynthesis; L-lysine biosynthesis via AAA pathway; L-lysine from L-alpha-aminoadipate (Thermus route): step 3/5. It participates in amino-acid biosynthesis; L-arginine biosynthesis. Functionally, involved in both the arginine and lysine biosynthetic pathways. The chain is Putative [LysW]-L-2-aminoadipate/[LysW]-L-glutamate phosphate reductase from Natronomonas pharaonis (strain ATCC 35678 / DSM 2160 / CIP 103997 / JCM 8858 / NBRC 14720 / NCIMB 2260 / Gabara) (Halobacterium pharaonis).